We begin with the raw amino-acid sequence, 252 residues long: MPVHATPAAESQIISMPEWRRTANFKPSVWGDRFANYAEDIITQTQMQEQVEELKQVRKEVFTNAADDSSHQLKPIDEIQRLGVAYHFESEIDQALERIHETYQDIHDGGDLYNVALRFRLLRRHGYNVSCDVFNKFKDTNGDYKKSLVTDLSGMLSFYEAAHLRVHGEKLLEEALVFTTTHLQSASAKSSLLKTQITEAVERLLKTMERLGARRYMSIYQDEASYSENLLKLAKLDFNWQCLHKKELSDIP.

Belongs to the terpene synthase family. Tpsa subfamily.

The polypeptide is Putative pinene synthase (Fragaria ananassa (Strawberry)).